We begin with the raw amino-acid sequence, 266 residues long: Protein SCO2 homolog, mitochondrial (266 aa).

The N-terminal 41 residues, 1 to 41 (MLLLTRSPTAWHRLSQLKPRVLPGTLGGQALHLRSWLLSRQ), are a transit peptide targeting the mitochondrion. The Mitochondrial matrix portion of the chain corresponds to 42 to 60 (GPAETGGQGQPQGPGLRTR). The chain crosses the membrane as a helical span at residues 61-78 (LLITGLFGAGLGGAWLAL). The Mitochondrial intermembrane segment spans residues 79–266 (RAEKERLQQQ…HMAAFRSVLS (188 aa)). The Thioredoxin domain maps to 85 to 259 (LQQQKRTEAL…ISDSVRRHMA (175 aa)). Residues cysteine 133, cysteine 137, and histidine 224 each contribute to the Cu cation site. Cysteine 133 and cysteine 137 are joined by a disulfide.

It belongs to the SCO1/2 family. Homodimer. Interacts with COA6. Found in a complex with TMEM177, COX20, COA6, MT-CO2/COX2, COX18 and SCO1. Interacts with TMEM177 in a COX20-dependent manner. Interacts with COX20 in a MT-CO2/COX2- and COX18-dependent manner. Interacts with COX16. In terms of tissue distribution, ubiquitous.

Its subcellular location is the mitochondrion inner membrane. Its function is as follows. Copper metallochaperone essential for the synthesis and maturation of cytochrome c oxidase subunit II (MT-CO2/COX2) by facilitating the incorporation of copper into the Cu(A) site of MT-CO2/COX2. Could also act as a thiol-disulfide oxidoreductase to regulate the redox state of the cysteines in SCO1 during maturation of MT-CO2/COX2. In Homo sapiens (Human), this protein is Protein SCO2 homolog, mitochondrial (SCO2).